The chain runs to 133 residues: Ribosome-binding factor A (133 aa).

This sequence belongs to the RbfA family. In terms of assembly, monomer. Binds 30S ribosomal subunits, but not 50S ribosomal subunits or 70S ribosomes.

The protein resides in the cytoplasm. Functionally, one of several proteins that assist in the late maturation steps of the functional core of the 30S ribosomal subunit. Associates with free 30S ribosomal subunits (but not with 30S subunits that are part of 70S ribosomes or polysomes). Required for efficient processing of 16S rRNA. May interact with the 5'-terminal helix region of 16S rRNA. In Chelativorans sp. (strain BNC1), this protein is Ribosome-binding factor A.